A 409-amino-acid polypeptide reads, in one-letter code: Elongation factor Tu (409 aa).

A tr-type G domain is found at 10–214 (KPHVNVGTIG…AVDNYIPTPE (205 aa)). A G1 region spans residues 19–26 (GHVDHGKT). 19 to 26 (GHVDHGKT) provides a ligand contact to GTP. Residue Thr-26 coordinates Mg(2+). Residues 60-64 (GITIN) form a G2 region. Residues 81-84 (DCPG) form a G3 region. Residues 81–85 (DCPGH) and 136–139 (NKVD) contribute to the GTP site. The interval 136 to 139 (NKVD) is G4. Residues 174 to 176 (SGL) are G5.

Belongs to the TRAFAC class translation factor GTPase superfamily. Classic translation factor GTPase family. EF-Tu/EF-1A subfamily. Monomer.

It is found in the cytoplasm. The catalysed reaction is GTP + H2O = GDP + phosphate + H(+). In terms of biological role, GTP hydrolase that promotes the GTP-dependent binding of aminoacyl-tRNA to the A-site of ribosomes during protein biosynthesis. The chain is Elongation factor Tu from Thermosynechococcus vestitus (strain NIES-2133 / IAM M-273 / BP-1).